Consider the following 86-residue polypeptide: Beta-toxin To4 (86 aa).

An N-terminal signal peptide occupies residues Met-1–Cys-20. The LCN-type CS-alpha/beta domain occupies Lys-21–Gly-83. Disulfide bonds link Cys-31–Cys-82, Cys-35–Cys-57, Cys-43–Cys-63, and Cys-47–Cys-65. A Cysteine amide modification is found at Cys-82.

Belongs to the long (4 C-C) scorpion toxin superfamily. Sodium channel inhibitor family. Beta subfamily. In terms of tissue distribution, expressed by the venom gland.

The protein resides in the secreted. In terms of biological role, beta toxins bind voltage-independently at site-4 of sodium channels (Nav) and shift the voltage of activation toward more negative potentials thereby affecting sodium channel activation and promoting spontaneous and repetitive firing. This toxin shows moderate inhibition of Nav1.1/SCN1A, Nav1.2/SCN2A, and Nav1.4/SCN4A, and promotes a left voltage shift on these channels. It exhibits similar potency on Nav1.2/SCN2A and Nav1.4/SCN4A (40-50% peak current inhibition at 0.5 uM), and weaker inhibition on Nav1.2 (20-30% peak current inhibition at 0.5 uM). This is Beta-toxin To4 from Tityus obscurus (Amazonian scorpion).